The chain runs to 815 residues: MNEYNNDNMEQEKEKKKEEQKYKNIIKKEYFIFPRLYDKNKEIEYNKLRIHNIKEYICIHLTISLFIILIECFVFSFNLNIKDTTYVEICVVIFSILNCLMHIVVLIKMYFFTSESVYTKGVFIGYIVLNQVFQFLSLYFFTKRNEQSKNDIAHLKYYDNSFNLYVHFFVDSVFILCLPALSFFLSVLFMMMFLCLNILLINMIKFNKTNYGSDIYHICLLSVVLLMFLILRYMMEERNRLLFFFIKDMMFDNYKKWYSDYIGAHYDKDKDSTTINGDNNKYEKEKCEDYKFLFSNKCILFHDFTLNACYKDYYSMICFLNKLLKSCNIKEDMSSNTSVNINGDTYQNMNFHDNINSNIPKNYNSFYEELKKNLNESDILTIAYEVEVLKNIKKINCDEIGKNWDYSFIDSEYGKSTLVILEVGYHLISPYIENNENKKKKLQLFLLLINSMYFPNPYHNANHGATVCHLSKCLAHITDYDSYLNNTYMICYLIASIAHDVGHPGKTNSYLSETNHILSIRYNDMSILENYHCSITFSILQLIGFDFLINNEDTKLVEKNNYTNMRKFIIELIISTDMKLHFEYVDIFKKRKKSQNFDISDTDAINLGTINIKLADIGHTCLKWKDHAKWTMLVSEEFFSQKRVEELHKNKNIDPLNFSNFGKEDNIDEGMIFNYENIYINYINNINNINTYDYSYIKLNFIHHHDFVKSIPSTQVYFFEIIVMPLIKELQSMEKSKKEITQKVLHNLNINLQTWRLIEKNINLFYNTEKMTGTDYYKNLEKQKLLRGIRLLDIAEEDVISLTKNFKEEIKHGKL.

Over 1-56 the chain is Cytoplasmic; that stretch reads MNEYNNDNMEQEKEKKKEEQKYKNIIKKEYFIFPRLYDKNKEIEYNKLRIHNIKEY. Residues 57-77 form a helical membrane-spanning segment; that stretch reads ICIHLTISLFIILIECFVFSF. Over 78 to 86 the chain is Extracellular; that stretch reads NLNIKDTTY. The chain crosses the membrane as a helical span at residues 87–107; sequence VEICVVIFSILNCLMHIVVLI. Over 108-120 the chain is Cytoplasmic; sequence KMYFFTSESVYTK. A helical transmembrane segment spans residues 121–141; that stretch reads GVFIGYIVLNQVFQFLSLYFF. The Extracellular portion of the chain corresponds to 142-160; that stretch reads TKRNEQSKNDIAHLKYYDN. Residues 161–181 traverse the membrane as a helical segment; sequence SFNLYVHFFVDSVFILCLPAL. Residues 182-183 lie on the Cytoplasmic side of the membrane; it reads SF. A helical membrane pass occupies residues 184 to 204; that stretch reads FLSVLFMMMFLCLNILLINMI. Topologically, residues 205–210 are extracellular; the sequence is KFNKTN. N207 carries N-linked (GlcNAc...) asparagine glycosylation. Residues 211-231 traverse the membrane as a helical segment; it reads YGSDIYHICLLSVVLLMFLIL. Over 232–815 the chain is Cytoplasmic; it reads RYMMEERNRL…FKEEIKHGKL (584 aa). Positions 384–762 constitute a PDEase domain; it reads YEVEVLKNIK…QTWRLIEKNI (379 aa). H459 (proton donor) is an active-site residue. Residue 459–463 coordinates 3',5'-cyclic GMP; that stretch reads HNANH. Residues H463, H499, D500, and D616 each coordinate a divalent metal cation. Positions 500, 616, and 715 each coordinate 3',5'-cyclic GMP.

The protein belongs to the cyclic nucleotide phosphodiesterase family. The cofactor is a divalent metal cation.

It is found in the membrane. The enzyme catalyses 3',5'-cyclic GMP + H2O = GMP + H(+). Its pathway is purine metabolism; 3',5'-cyclic GMP degradation; GMP from 3',5'-cyclic GMP: step 1/1. Specifically hydrolyzes the second messenger cGMP, which is a key regulator of many important physiological processes. Probably by regulating cGMP levels, required for activation of gametogenesis. The polypeptide is cGMP-specific 3',5'-cyclic phosphodiesterase delta (Plasmodium falciparum (isolate 3D7)).